We begin with the raw amino-acid sequence, 58 residues long: uncharacterized protein (58 aa).

This is an uncharacterized protein from Methanocaldococcus jannaschii (strain ATCC 43067 / DSM 2661 / JAL-1 / JCM 10045 / NBRC 100440) (Methanococcus jannaschii).